Consider the following 2003-residue polypeptide: MVKLANPLYTEWILEAIKKVKKQKQRPSEERICNAVSSSHGLDRRTVLEQLELSVKDGTILKVSNKGLNSYKDPDNPGRIALPKPRNHGKLDTKQSVDWNKLLKRAFEGLAETGGSTLKSIERFLKSQKDVSAACGGSAAPGFHQQLRLAIKRAVGHGRLLKDGPLYRLNTKAASAEGKEGCESLSCLPPVSLLPHEKDKPVAEPIPICSFCLGTKEQNREKQPEELVSCADCGNSGHPSCLKFSPELTVRVKALRWQCIECKTCSSCRDQGKNADNMLFCDSCDRGFHMECCDPPLTRMPKGMWICQICRPRKKGRKLLQKKAAQIKRRYANPIGRPKNRLKKQNTVSKGPFSKVRTGPGRGRKRKITVSSQSASSSEEGYLERIDGLDFCRDSNAPLKFNKKTKGLIDGLTKFFTPSPDGRKARGEVVDYSEQYRIRKKGNRKSSTSDWPTDNQDGWESKQENEERLFGSQEIMTERDMELFRDIQEQALQKVGVTGPPDPQVRCPSVIEFGKYEIHTWYSSPYPQEYSRLPKLYLCEFCLKYMKSRTILQQHMKKCGWFHPPANEIYRKNNISVFEVDGNVSTIYCQNLCLLAKLFLDHKTLYYDVEPFLFYVLTQNDVKGCHLVGYFSKEKHCQQKYNVSCIMILPQYQRKGYGRFLIDFSYLLSKREGQAGSPEKPLSDLGRLSYMAYWKSVILECLYHQNDKQISIKKLSKLTGVCPQDITSTLHHLRMLDFRSDQFVIIRREKLIQDHMAKLQLNLRPVDVDPECLRWTPVIVSNSVVSEDEDEEADEGEKEEPQGQERELETRVKVGKSVSREKKDQESSSLIETDKKPEVKELASSSRLSKQALPRDSLPANSQPPRRGRCGRKNRKTQERFGDKDSKMLVDETLSASQEQYGDCEEKSETSQERFTEMEEQLAAPQVQADGKPDIPKGRFSESVELWRGQLKKSPETLKCRLPEGNDRLPCCYTDGDRAFFRGFSESSEEEEEPESPRSNSPPILTKPTLKRKKPILHRRRRVRKRKHHNSSVVTETISETTEVLDEPFEDSDSERPMPRLEPTFEMEEEEEEEEEESELFPRGYFHCLSSQDILRCQSSSKRPSKEEEEEEEESDDADDTPVLKPVSLLRKCDVNSASLEPDTSTPMKKKKGWPKGKSRKPIHWKKRPGRKPGFKLNQEIIAASAQECIVEPVVPIKPGRKPRTQENEEIVEVKEDLLEERKEEMHTEPDEEAEEEEDTTSSDIRAMSPLDSSNSPEAEPKEPEPEEEDEKPSDDQRQSEEEPQELEEQEQEEEDEVTTEANQNEDHDADDEDEGHLDSLKTKEPEEQPAREDDKEEPGIQGSFLAANMQDSRENTKDKDEAEPDSEEDQPSHEASVVSETMPGSEEDHEEDSNTKEELIELKEEEEIPHSELDLETVQAVQSLTQEESSEHEGAYQDCEETLAACQTLQSYTHTDEDPQMSMVEDCHASEHNSPISSIPSHPSQSVRSVNSPSMPALESGYTQISPEQGSLSAPSMQNMETSPMMDVPSVSDHSQQVVDSGFSDLGSIESTTENYENPSSYDSTMGSSICGNNSSQSSCSYGGLSSSSSLTQNSCVVTQQMANMGNSCSMLQQNTVQPAANCNIKSPQTCVVERPPSNQQPPPPPPPPPPPQQPQPPPQQQAAPQPPPPQPQQQQQQQQQPPPPQQQPQPPPPQQQPPLSQCSMNNSFTAAPMIMEIPESGSTGNISIYERIPGDFGAGSYSQPSATFSLAKLQQLTNTIMDPHAMPYSHSPAVTSYATSVSLSNTGLAQLAPSHPLAGTPQAQATMTPPPNLASTTMNLTSPLLQCNMSATNIGIPHTQRLQGQMPVKGHISIRSKSAPLPSATAHQQQLYGRSPPAVAMQAGPRALAVQRGMNMGVNLMPTPAYNVNSMNMNTLNAMNSYRMTQPMMNSSYHSNPAYMNQTAQYPMQMQMGMMGSQAYTQQPMQPNPHGNMMYTGPSHHSYMNAAGVPKQSLNGPYMRR.

Positions 1–77 (MVKLANPLYT…LNSYKDPDNP (77 aa)) constitute an SAMD1-like winged helix (WH) domain. The required for activation of RUNX1-1 stretch occupies residues 1 to 144 (MVKLANPLYT…CGGSAAPGFH (144 aa)). The tract at residues 52-166 (ELSVKDGTIL…HGRLLKDGPL (115 aa)) is required for nuclear localization. Residues 95-171 (QSVDWNKLLK…KDGPLYRLNT (77 aa)) enclose the H15 domain. An interaction with PML region spans residues 144–663 (HQQLRLAIKR…RKGYGRFLID (520 aa)). Position 172 is an N6-acetyllysine (K172). PHD-type zinc fingers lie at residues 206–265 (IPIC…CKTC) and 262–313 (CKTC…CRPR). The interaction with RUNX1-1 stretch occupies residues 312 to 663 (PRKKGRKLLQ…RKGYGRFLID (352 aa)). Positions 336 to 377 (GRPKNRLKKQNTVSKGPFSKVRTGPGRGRKRKITVSSQSASS) are disordered. N6-acetyllysine occurs at positions 350 and 355. T369 carries the phosphothreonine; by PKB/AKT1 modification. S419 bears the Phosphoserine mark. Positions 439 to 466 (RKKGNRKSSTSDWPTDNQDGWESKQENE) are disordered. Residues 445–458 (KSSTSDWPTDNQDG) show a composition bias toward polar residues. S472 is subject to Phosphoserine. Residues 487–777 (IQEQALQKVG…VDPECLRWTP (291 aa)) are catalytic. The MYST-type HAT domain maps to 503–777 (PQVRCPSVIE…VDPECLRWTP (275 aa)). Positions 506–809 (RCPSVIEFGK…EPQGQERELE (304 aa)) are mediates interaction with BRPF1, required for histone H3 acetyltransferase activity. Residues 536–561 (LYLCEFCLKYMKSRTILQQHMKKCGW) form a C2HC MYST-type zinc finger. At K603 the chain carries N6-acetyllysine; by autocatalysis. Acetyl-CoA is bound by residues 644 to 648 (SCIMI) and 653 to 659 (QRKGYGR). Residue E679 is the Proton donor/acceptor of the active site. S683 lines the acetyl-CoA pocket. The disordered stretch occupies residues 784 to 939 (VVSEDEDEEA…DGKPDIPKGR (156 aa)). S786 carries the phosphoserine modification. Acidic residues predominate over residues 786–798 (SEDEDEEADEGEK). A compositionally biased stretch (basic and acidic residues) spans 799–841 (EEPQGQERELETRVKVGKSVSREKKDQESSSLIETDKKPEVKE). N6-acetyllysine is present on residues K813 and K816. A Glycyl lysine isopeptide (Lys-Gly) (interchain with G-Cter in SUMO2) cross-link involves residue K836. The span at 866 to 875 (RRGRCGRKNR) shows a compositional bias: basic residues. Positions 876–890 (KTQERFGDKDSKMLV) are enriched in basic and acidic residues. Y901 bears the Phosphotyrosine mark. The span at 904 to 917 (CEEKSETSQERFTE) shows a compositional bias: basic and acidic residues. A phosphoserine mark is found at S941 and S954. Residues 983 to 1083 (GFSESSEEEE…EEEESELFPR (101 aa)) form a disordered region. The residue at position 1007 (K1007) is an N6-acetyllysine. Over residues 1009-1030 (TLKRKKPILHRRRRVRKRKHHN) the composition is skewed to basic residues. Low complexity predominate over residues 1031 to 1042 (SSVVTETISETT). Composition is skewed to acidic residues over residues 1043 to 1053 (EVLDEPFEDSD) and 1065 to 1079 (FEME…EESE). S1090, S1091, and S1115 each carry phosphoserine. Disordered stretches follow at residues 1096–1174 (RCQS…RKPG), 1197–1438 (IKPG…GAYQ), 1455–1533 (HTDE…PSVS), 1546–1568 (DLGS…STMG), and 1631–1707 (TCVV…CSMN). Acidic residues predominate over residues 1107-1120 (EEEEEEEESDDADD). The segment covering 1136-1147 (NSASLEPDTSTP) has biased composition (polar residues). The segment covering 1148-1174 (MKKKKGWPKGKSRKPIHWKKRPGRKPG) has biased composition (basic residues). Residues 1204 to 1229 (RTQENEEIVEVKEDLLEERKEEMHTE) are compositionally biased toward basic and acidic residues. 2 stretches are compositionally biased toward acidic residues: residues 1230-1241 (PDEEAEEEEDTT) and 1282-1299 (EEPQ…DEVT). Positions 1317–1334 (HLDSLKTKEPEEQPARED) are enriched in basic and acidic residues. Residue K1336 forms a Glycyl lysine isopeptide (Lys-Gly) (interchain with G-Cter in SUMO2) linkage. Basic and acidic residues-rich tracts occupy residues 1352–1361 (DSRENTKDKD) and 1393–1414 (DSNT…HSEL). A compositionally biased stretch (low complexity) spans 1473 to 1490 (HNSPISSIPSHPSQSVRS). 2 stretches are compositionally biased toward polar residues: residues 1502 to 1523 (GYTQ…NMET) and 1550 to 1568 (IEST…STMG). The interval 1511–1636 (GSLSAPSMQN…KSPQTCVVER (126 aa)) is interaction with RUNX1-2. An interaction with PML region spans residues 1511 to 1740 (GSLSAPSMQN…YERIPGDFGA (230 aa)). Composition is skewed to pro residues over residues 1640-1673 (NQQP…PPQP) and 1682-1698 (QPPP…PQQQ). Residues 1912–1947 (SMNMNTLNAMNSYRMTQPMMNSSYHSNPAYMNQTAQ) are required for activation of RUNX1-2.

This sequence belongs to the MYST (SAS/MOZ) family. As to quaternary structure, component of the MOZ/MORF complex composed at least of ING5, KAT6A, KAT6B, MEAF6 and one of BRPF1, BRD1/BRPF2 and BRPF3. Interacts with RUNX2. Interacts with RUNX1; phosphorylation of RUNX1 enhances the interaction. Interacts with p53/TP53. Interacts with PML and this interaction positively regulates its acetylation activity towards p53/TP53. In terms of processing, autoacetylated. Autoacetylation at Lys-603 is required for proper function. Post-translationally, phosphorylation at Thr-369 by PKB/AKT1 inhibits its interaction with PML and negatively regulates its acetylation activity towards p53/TP53.

It is found in the nucleus. The protein localises to the nucleolus. Its subcellular location is the nucleoplasm. The protein resides in the PML body. It carries out the reaction L-lysyl-[protein] + acetyl-CoA = N(6)-acetyl-L-lysyl-[protein] + CoA + H(+). Histone acetyltransferase that acetylates lysine residues in histone H3 and histone H4 (in vitro). Component of the MOZ/MORF complex which has a histone H3 acetyltransferase activity. May act as a transcriptional coactivator for RUNX1 and RUNX2. Acetylates p53/TP53 at 'Lys-120' and 'Lys-382' and controls its transcriptional activity via association with PML. This Mus musculus (Mouse) protein is Histone acetyltransferase KAT6A (Kat6a).